We begin with the raw amino-acid sequence, 1188 residues long: Spermatogenesis-associated protein 31C1 (1188 aa).

A helical transmembrane segment spans residues 23–43; sequence PWVLDIFLTLVFALGLFFLLL. 8 disordered regions span residues 57–92, 121–249, 483–510, 530–567, 733–813, 934–1013, 1121–1143, and 1155–1188; these read PSPRKRKRHLVSQRHLVSQCPTGRRGRPRGRMKNHS, LEKG…LLTP, PGTSQAKGKPRPWQSSTSTGESSKEAQT, TPQNLSRGMESFPGKVLGATSEESERNLRKPLRSDSGS, MPER…PTVP, NMGH…PSIS, QQATLKNQSRPNRDRQIRDQQPL, and LRHPQLLLPKKAVSPVSPPQHRPKTPSASSHHHH. 2 stretches are compositionally biased toward basic residues: residues 59-68 and 80-92; these read PRKRKRHLVS and RRGRPRGRMKNHS. The segment covering 138-154 has biased composition (basic and acidic residues); the sequence is VGKRTPDGASRSSHEPM. A compositionally biased stretch (low complexity) spans 191 to 207; that stretch reads SSLSASQPPEPSLLLER. Pro residues predominate over residues 210–241; that stretch reads PEPPALFPHPPHTPDPLACSPPPPKGFTPPPL. Residues 495 to 510 are compositionally biased toward polar residues; the sequence is WQSSTSTGESSKEAQT. 2 stretches are compositionally biased toward polar residues: residues 783–800 and 943–954; these read LKGSTQQSRSLGAQSSRA and PNCQGSCKSQSP. The span at 960–976 shows a compositional bias: basic and acidic residues; the sequence is HKRENSRKPNLEKHEEM. Positions 1121–1130 are enriched in polar residues; the sequence is QQATLKNQSR.

The protein belongs to the SPATA31 family.

The protein localises to the membrane. In terms of biological role, may play a role in spermatogenesis. The sequence is that of Spermatogenesis-associated protein 31C1 (SPATA31C1) from Homo sapiens (Human).